The sequence spans 215 residues: Orotate phosphoribosyltransferase (215 aa).

Lys26 contacts 5-phospho-alpha-D-ribose 1-diphosphate. 34–35 (FF) provides a ligand contact to orotate. 5-phospho-alpha-D-ribose 1-diphosphate is bound by residues 72–73 (YK), Arg99, Lys100, Lys103, His105, and 124–132 (DDVITAGTA). Residues Thr128 and Arg156 each contribute to the orotate site.

It belongs to the purine/pyrimidine phosphoribosyltransferase family. PyrE subfamily. In terms of assembly, homodimer. The cofactor is Mg(2+).

The enzyme catalyses orotidine 5'-phosphate + diphosphate = orotate + 5-phospho-alpha-D-ribose 1-diphosphate. Its pathway is pyrimidine metabolism; UMP biosynthesis via de novo pathway; UMP from orotate: step 1/2. Functionally, catalyzes the transfer of a ribosyl phosphate group from 5-phosphoribose 1-diphosphate to orotate, leading to the formation of orotidine monophosphate (OMP). The sequence is that of Orotate phosphoribosyltransferase from Cellvibrio japonicus (strain Ueda107) (Pseudomonas fluorescens subsp. cellulosa).